Reading from the N-terminus, the 217-residue chain is 3,4-dihydroxy-2-butanone 4-phosphate synthase (217 aa).

Residues 37-38, Asp42, 150-154, and Glu174 each bind D-ribulose 5-phosphate; these read RE and RGGHT. Glu38 contributes to the Mg(2+) binding site. Residue His153 participates in Mg(2+) binding.

The protein belongs to the DHBP synthase family. As to quaternary structure, homodimer. Mg(2+) serves as cofactor. It depends on Mn(2+) as a cofactor.

It catalyses the reaction D-ribulose 5-phosphate = (2S)-2-hydroxy-3-oxobutyl phosphate + formate + H(+). It participates in cofactor biosynthesis; riboflavin biosynthesis; 2-hydroxy-3-oxobutyl phosphate from D-ribulose 5-phosphate: step 1/1. Catalyzes the conversion of D-ribulose 5-phosphate to formate and 3,4-dihydroxy-2-butanone 4-phosphate. This Salmonella paratyphi A (strain ATCC 9150 / SARB42) protein is 3,4-dihydroxy-2-butanone 4-phosphate synthase.